The primary structure comprises 225 residues: Transmembrane protein 225 (225 aa).

Residues Met1 to Ser8 are Cytoplasmic-facing. The chain crosses the membrane as a helical span at residues Ile9–Thr29. The Extracellular segment spans residues Leu30–Ser72. Residues Ser73 to Pro93 form a helical membrane-spanning segment. Over Gln94 to Gln99 the chain is Cytoplasmic. A helical membrane pass occupies residues Leu100–Tyr120. Over His121–Arg136 the chain is Extracellular. The chain crosses the membrane as a helical span at residues Ile137–Leu157. The Cytoplasmic portion of the chain corresponds to Ser158–Leu225. Residues Arg219–Trp223 carry the RVxF motif.

As to quaternary structure, interacts (via RVxF motif) with PPP1CC.

It localises to the cytoplasmic vesicle. The protein localises to the secretory vesicle. It is found in the acrosome membrane. Functionally, probably inhibits protein phosphatase 1 (PP1) in sperm via binding to catalytic subunit PPP1CC. The polypeptide is Transmembrane protein 225 (TMEM225) (Homo sapiens (Human)).